The following is a 59-amino-acid chain: Large ribosomal subunit protein bL32 (59 aa).

This sequence belongs to the bacterial ribosomal protein bL32 family. In terms of assembly, part of the 50S ribosomal subunit.

This Bacillus subtilis (strain 168) protein is Large ribosomal subunit protein bL32 (rpmF).